The chain runs to 869 residues: Mismatch repair endonuclease PMS2 (869 aa).

Positions 44, 69, 108, 109, and 110 each coordinate ATP. A Nuclear localization signal motif is present at residues 585–588 (RRFK).

The protein belongs to the DNA mismatch repair MutL/HexB family.

The protein localises to the nucleus. It carries out the reaction ATP + H2O = ADP + phosphate + H(+). In terms of biological role, component of the post-replicative DNA mismatch repair system (MMR). Involved in B cell growth by positively regulating B cell proliferation and controlling replication efficiency. Controls cell cycle to prevent re-replication and defects in DNA damage-induced G2 checkpoint. Doesn't seem to counteract or control the immunoglobulin gene conversion (Ig GC) and to contribute to guanine/uracil mismatch repair. Possesses an ATPase activity, but in the absence of gross structural changes, ATP hydrolysis may not be necessary for proficient mismatch repair. The sequence is that of Mismatch repair endonuclease PMS2 from Gallus gallus (Chicken).